Consider the following 333-residue polypeptide: Cinnamoyl-CoA reductase 1 (333 aa).

NADP(+) contacts are provided by residues 13 to 19, Arg-38, Lys-44, 64 to 65, 84 to 86, Tyr-157, Lys-161, 184 to 187, and Ser-199; these read GAGGFIA, DL, TAS, and PVLV. The cysteines at positions 150 and 158 are disulfide-linked. Lys-161 serves as the catalytic Proton donor.

It belongs to the NAD(P)-dependent epimerase/dehydratase family. Dihydroflavonol-4-reductase subfamily. The formation of a reversible disulfide bond reduces activity by perturbing the positioning of nearby catalytic residues. In terms of tissue distribution, expressed in flowers, leaves and stems.

It localises to the cytoplasm. It carries out the reaction (E)-coniferaldehyde + NADP(+) + CoA = (E)-feruloyl-CoA + NADPH + H(+). The enzyme catalyses (E)-4-coumaraldehyde + NADP(+) + CoA = (E)-4-coumaroyl-CoA + NADPH + H(+). It catalyses the reaction (E)-sinapaldehyde + NADP(+) + CoA = (E)-sinapoyl-CoA + NADPH + H(+). The catalysed reaction is (E)-cinnamaldehyde + NADP(+) + CoA = (E)-cinnamoyl-CoA + NADPH + H(+). It functions in the pathway aromatic compound metabolism; phenylpropanoid biosynthesis. With respect to regulation, inhibited by sodium iodide-mediated oxidation. In terms of biological role, involved in the latter stages of lignin biosynthesis. Catalyzes one of the last steps of monolignol biosynthesis, the conversion of cinnamoyl-CoAs into their corresponding cinnamaldehydes. Mediates the conversion of feruloyl CoA to coniferylaldehyde. Also active toward p-coumaroyl-CoA and sinapoyl-CoA. Involved in the production of floral volatile phenylpropanoids in flowers of fragrant cultivars (e.g. cv. Mitchell and cv. V26) from cinnamic acid, a common precursor with the anthocyanin biosynthesis pathway involved in flower pigmentation. The chain is Cinnamoyl-CoA reductase 1 from Petunia hybrida (Petunia).